The chain runs to 680 residues: DNA ligase (680 aa).

NAD(+) contacts are provided by residues 32-36, 81-82, and Glu-115; these read DAVYD and SL. Lys-117 acts as the N6-AMP-lysine intermediate in catalysis. The NAD(+) site is built by Arg-138, Glu-175, Lys-291, and Lys-315. Positions 409, 412, 427, and 432 each coordinate Zn(2+). The region spanning 600–680 is the BRCT domain; that stretch reads ASEQHLKGLT…RLQAMLKDSP (81 aa).

It belongs to the NAD-dependent DNA ligase family. LigA subfamily. Mg(2+) serves as cofactor. The cofactor is Mn(2+).

The enzyme catalyses NAD(+) + (deoxyribonucleotide)n-3'-hydroxyl + 5'-phospho-(deoxyribonucleotide)m = (deoxyribonucleotide)n+m + AMP + beta-nicotinamide D-nucleotide.. In terms of biological role, DNA ligase that catalyzes the formation of phosphodiester linkages between 5'-phosphoryl and 3'-hydroxyl groups in double-stranded DNA using NAD as a coenzyme and as the energy source for the reaction. It is essential for DNA replication and repair of damaged DNA. The sequence is that of DNA ligase from Synechococcus sp. (strain CC9902).